We begin with the raw amino-acid sequence, 591 residues long: Aspartate--tRNA(Asp/Asn) ligase (591 aa).

L-aspartate is bound at residue glutamate 175. The tract at residues 199-202 (QQYK) is aspartate. L-aspartate is bound by residues arginine 221 and histidine 450. 221–223 (RDE) contacts ATP. Glutamate 484 lines the ATP pocket. Arginine 491 contributes to the L-aspartate binding site. ATP is bound at residue 536-539 (GVDR).

Belongs to the class-II aminoacyl-tRNA synthetase family. Type 1 subfamily. In terms of assembly, homodimer.

The protein resides in the cytoplasm. The enzyme catalyses tRNA(Asx) + L-aspartate + ATP = L-aspartyl-tRNA(Asx) + AMP + diphosphate. Functionally, aspartyl-tRNA synthetase with relaxed tRNA specificity since it is able to aspartylate not only its cognate tRNA(Asp) but also tRNA(Asn). Reaction proceeds in two steps: L-aspartate is first activated by ATP to form Asp-AMP and then transferred to the acceptor end of tRNA(Asp/Asn). This is Aspartate--tRNA(Asp/Asn) ligase from Rhodopseudomonas palustris (strain TIE-1).